The following is a 98-amino-acid chain: uncharacterized protein (98 aa).

Positions 77–98 (SERAGEEVPPLAVAGSDDGHDH) are disordered.

The protein to M.tuberculosis Rv1991c and Rv3269.

This is an uncharacterized protein from Mycobacterium bovis (strain ATCC BAA-935 / AF2122/97).